The sequence spans 144 residues: Eukaryotic translation initiation factor 1A, Y-chromosomal (144 aa).

Positions 1–15 (MPKNKGKGGKNRRRG) are enriched in basic residues. Positions 1 to 26 (MPKNKGKGGKNRRRGKNENESEKREL) are disordered. A compositionally biased stretch (basic and acidic residues) spans 16-26 (KNENESEKREL). Residues 22–96 (EKRELVFKED…NKADVILKYN (75 aa)) form the S1-like domain. Residue lysine 88 forms a Glycyl lysine isopeptide (Lys-Gly) (interchain with G-Cter in ubiquitin) linkage. A disordered region spans residues 114-144 (KINETDTFGPGDDDEVQFDDIGDDDEDIDDI). Residues 124-144 (GDDDEVQFDDIGDDDEDIDDI) are compositionally biased toward acidic residues.

This sequence belongs to the eIF-1A family. Component of the 43S pre-initiation complex (43S PIC), which is composed of the 40S ribosomal subunit, EIF1, eIF1A (EIF1AX), eIF3 complex, EIF5 and eIF2-GTP-initiator tRNA complex (eIF2 ternary complex). Interacts with EIF5; this interaction contributes to the maintenance of EIF1 within the open 43S PIC. Interacts through its C-terminal domain (CTD) with the CTD of EIF5B; from the location of the start codon by the 43S complex until the formation of the 80S complex. As to expression, ubiquitous.

The protein resides in the cytoplasm. Component of the 43S pre-initiation complex (43S PIC), which binds to the mRNA cap-proximal region, scans mRNA 5'-untranslated region, and locates the initiation codon. This protein enhances formation of the cap-proximal complex. Together with EIF1, facilitates scanning, start codon recognition, promotion of the assembly of 48S complex at the initiation codon (43S PIC becomes 48S PIC after the start codon is reached), and dissociation of aberrant complexes. After start codon location, together with EIF5B orients the initiator methionine-tRNA in a conformation that allows 60S ribosomal subunit joining to form the 80S initiation complex. Is released after 80S initiation complex formation, just after GTP hydrolysis by EIF5B, and before release of EIF5B. Its globular part is located in the A site of the 40S ribosomal subunit. Its interaction with EIF5 during scanning contribute to the maintenance of EIF1 within the open 43S PIC. In contrast to yeast orthologs, does not bind EIF1. This Pan troglodytes (Chimpanzee) protein is Eukaryotic translation initiation factor 1A, Y-chromosomal (EIF1AY).